We begin with the raw amino-acid sequence, 346 residues long: Dihydroorotase (346 aa).

Zn(2+) is bound by residues His-13 and His-15. Substrate contacts are provided by residues His-15–Arg-17 and Asn-41. Lys-99, His-136, and His-174 together coordinate Zn(2+). An N6-carboxylysine modification is found at Lys-99. Position 136 (His-136) interacts with substrate. Leu-219 contributes to the substrate binding site. Position 247 (Asp-247) interacts with Zn(2+). Asp-247 is a catalytic residue. 2 residues coordinate substrate: His-251 and Ala-263.

The protein belongs to the metallo-dependent hydrolases superfamily. DHOase family. Class II DHOase subfamily. Homodimer. Zn(2+) is required as a cofactor.

The catalysed reaction is (S)-dihydroorotate + H2O = N-carbamoyl-L-aspartate + H(+). It functions in the pathway pyrimidine metabolism; UMP biosynthesis via de novo pathway; (S)-dihydroorotate from bicarbonate: step 3/3. Functionally, catalyzes the reversible cyclization of carbamoyl aspartate to dihydroorotate. This Rhizobium leguminosarum bv. trifolii (strain WSM2304) protein is Dihydroorotase.